The primary structure comprises 145 residues: Large ribosomal subunit protein uL16 (145 aa).

Belongs to the universal ribosomal protein uL16 family. As to quaternary structure, part of the 50S ribosomal subunit.

Functionally, binds 23S rRNA and is also seen to make contacts with the A and possibly P site tRNAs. The sequence is that of Large ribosomal subunit protein uL16 from Agathobacter rectalis (strain ATCC 33656 / DSM 3377 / JCM 17463 / KCTC 5835 / VPI 0990) (Eubacterium rectale).